The sequence spans 504 residues: Sugar transport protein 14 (504 aa).

Topologically, residues 1-25 (MAGGALTDEGGLKRAHLYEHRITSY) are cytoplasmic. The next 12 membrane-spanning stretches (helical) occupy residues 26-46 (FIFA…DLGV), 84-104 (ILTL…FGAS), 121-141 (VSFF…MLIL), 144-164 (IFLG…LSEM), 171-191 (GTVN…ANLI), 205-225 (LSLG…LVLP), 286-308 (LVIG…ILFY), 315-337 (SLGF…LVVA), 352-372 (FLLL…GVTL), 382-402 (LPKS…LAYG), 428-448 (VVVC…LVSL), and 454-474 (GIFL…YFLL). The Cytoplasmic portion of the chain corresponds to 475-504 (PETKQVPIEEVYLLWRQHWLWKKYVEDVDE).

This sequence belongs to the major facilitator superfamily. Sugar transporter (TC 2.A.1.1) family.

It localises to the membrane. In terms of biological role, mediates an active uptake of hexoses, probably by sugar/hydrogen symport. The sequence is that of Sugar transport protein 14 (STP14) from Arabidopsis thaliana (Mouse-ear cress).